We begin with the raw amino-acid sequence, 78 residues long: UPF0349 protein Sca_0544 (78 aa).

It belongs to the UPF0349 family.

The polypeptide is UPF0349 protein Sca_0544 (Staphylococcus carnosus (strain TM300)).